We begin with the raw amino-acid sequence, 479 residues long: MAEQTATTTSAIDIRRFHGLLAGTAMGVYLLVLVGVTTAVTDAAAACAAWPICGNGWATPGSAIGWLAVGHRVVAVIIGICAVVTLGVGIREHIERRVLITVAVGSFLYPIQAAVGAVVAVQGPDLTLSVIHLIGGLSIFLTLAIALAWSLETETGDPTETQTTPSKPEPDQDLPPASEYDPDLPADPRDRLLATLRAYIRLTKPRLMWLLCLVASAGMTLGATTTGQLTPGIALATLGGGVLSIGASGTFNHVLERDVDRRMQRTSDRPLATDLVPVWNAIAFGILLTVISIVLFSWVNMLAAILGGVAIVFYSVVYTLLLKPNTVQNTVIGGAAGALPALIGWVAVTGDIGFGGLALATVIFLWTPAHFYNLALAYKEDYERGGFPMMPVVRGETETRKHVIWWLALTLVAAGGLATIEALGIVYAVASIVFGAVFLYFAIKLHYEQTKAAAFHSFHASNAYLGAVLIAIVFDTLVI.

The tract at residues 1–207 is unknown; that stretch reads MAEQTATTTS…AYIRLTKPRL (207 aa). The next 4 membrane-spanning stretches (helical) occupy residues 20–40, 64–84, 98–118, and 128–148; these read LLAG…TTAV, IGWL…CAVV, VLIT…VGAV, and LSVI…IALA. Over residues 155 to 164 the composition is skewed to low complexity; it reads TGDPTETQTT. Residues 155 to 186 form a disordered region; the sequence is TGDPTETQTTPSKPEPDQDLPPASEYDPDLPA. A run of 9 helical transmembrane segments spans residues 207–227, 231–251, 271–291, 303–322, 324–344, 345–365, 402–422, 423–443, and 459–479; these read LMWL…TTTG, PGIA…SGTF, LATD…LTVI, AAIL…TLLL, PNTV…ALIG, WVAV…VIFL, HVIW…TIEA, LGIV…YFAI, and HASN…TLVI. The tract at residues 208 to 476 is protoheme IX prenyltransferase; sequence MWLLCLVASA…AVLIAIVFDT (269 aa).

This sequence in the C-terminal section; belongs to the UbiA prenyltransferase family. Protoheme IX farnesyltransferase subfamily.

The protein localises to the cell membrane. It carries out the reaction heme b + (2E,6E)-farnesyl diphosphate + H2O = Fe(II)-heme o + diphosphate. It participates in porphyrin-containing compound metabolism; heme O biosynthesis; heme O from protoheme: step 1/1. Converts heme B (protoheme IX) to heme O by substitution of the vinyl group on carbon 2 of heme B porphyrin ring with a hydroxyethyl farnesyl side group. This chain is Protoheme IX farnesyltransferase (ctaB), found in Haloquadratum walsbyi (strain DSM 16790 / HBSQ001).